Consider the following 422-residue polypeptide: Oxysterol-binding protein 7 (422 aa).

The disordered stretch occupies residues 283–313 (EAAPASSASKKEKKKEKKKAKHSKHTCSPSD). Basic residues predominate over residues 293–307 (KEKKKEKKKAKHSKH). Residues 354–384 (MQAADQIKKEIEDEQRKRLQITKEEEKKERA) adopt a coiled-coil conformation. Positions 402-422 (TLAPVSNSTSSTASDAASGSN) are disordered. The span at 407-422 (SNSTSSTASDAASGSN) shows a compositional bias: low complexity.

Belongs to the OSBP family.

The polypeptide is Oxysterol-binding protein 7 (osbG) (Dictyostelium discoideum (Social amoeba)).